The chain runs to 517 residues: Glutamate--tRNA ligase (517 aa).

Positions Pro-10–Gly-20 match the 'HIGH' region motif. Zn(2+) is bound by residues Cys-107, Cys-109, Cys-134, and Asp-136. Residues Lys-250 to Arg-254 carry the 'KMSKS' region motif. Residue Lys-253 coordinates ATP.

Belongs to the class-I aminoacyl-tRNA synthetase family. Glutamate--tRNA ligase type 1 subfamily. As to quaternary structure, monomer. Zn(2+) is required as a cofactor.

The protein localises to the cytoplasm. It catalyses the reaction tRNA(Glu) + L-glutamate + ATP = L-glutamyl-tRNA(Glu) + AMP + diphosphate. Functionally, catalyzes the attachment of glutamate to tRNA(Glu) in a two-step reaction: glutamate is first activated by ATP to form Glu-AMP and then transferred to the acceptor end of tRNA(Glu). In Leptospira biflexa serovar Patoc (strain Patoc 1 / ATCC 23582 / Paris), this protein is Glutamate--tRNA ligase.